The sequence spans 1335 residues: Regulatory-associated protein of mTOR (1335 aa).

Phosphoserine is present on residues S44 and S122. The residue at position 696 (S696) is a Phosphoserine; by MAPK8. T700 carries O-linked (GlcNAc) threonine glycosylation. T706 carries the post-translational modification Phosphothreonine; by MAPK8. 2 positions are modified to phosphoserine; by RPS6KA1: S719 and S721. S722 is modified (phosphoserine; by AMPK and RPS6KA1). Residue S738 is modified to Phosphoserine. A disordered region spans residues 749-771 (GSSVAFSPGNLSTSSSASSTLGS). Low complexity predominate over residues 755-771 (SPGNLSTSSSASSTLGS). Residue S791 is modified to Phosphoserine. Position 792 is a phosphoserine; by AMPK (S792). Phosphoserine occurs at positions 836 and 855. Over residues 853 to 866 (TSSLTQSAPASPTN) the composition is skewed to polar residues. A disordered region spans residues 853 to 942 (TSSLTQSAPA…GPDQTTDDAD (90 aa)). S859 bears the Phosphoserine; by MTOR mark. A Phosphoserine; by MAPK8, MTOR and NLK modification is found at S863. T865 carries the post-translational modification Phosphothreonine. Phosphoserine is present on S877. Low complexity predominate over residues 877–887 (SPPASSTSSCS). A compositionally biased stretch (polar residues) spans 888–898 (LTNDVAKQTVS). Residues K932 and K948 each participate in a glycyl lysine isopeptide (Lys-Gly) (interchain with G-Cter in ubiquitin) cross-link. The residue at position 982 (S982) is a Phosphoserine. 7 WD repeats span residues 1020 to 1061 (NRNP…DYFH), 1065 to 1106 (PRYT…EKNP), 1121 to 1160 (TTRG…KVQD), 1164 to 1203 (GADS…SECR), 1209 to 1249 (EHTA…SVNV), 1251 to 1291 (QIVK…NNIK), and 1299 to 1335 (QRVG…KRVR). The residue at position 1097 (K1097) is an N6-acetyllysine.

This sequence belongs to the WD repeat RAPTOR family. Part of the mechanistic target of rapamycin complex 1 (mTORC1) which contains MTOR, MLST8 and RPTOR. mTORC1 associates with AKT1S1/PRAS40, which inhibits its activity. mTORC1 associates with DEPTOR, which regulates its activity. mTORC1 binds to and is inhibited by FKBP12-rapamycin. Forms a complex with MTOR under both leucine-rich and -poor conditions. Interacts with (via TOS motifs) EIF4EBP1 and RPS6KB1; interaction is independent of its association with MTOR. Binds preferentially to poorly or non-phosphorylated forms of EIF4EBP1, and this binding is critical to the ability of MTOR to catalyze phosphorylation. Interacts with ULK1 in a nutrient-dependent manner; the interaction is reduced during starvation. Interacts with GTP-bound form of RagA/RRAGA or RagB/RRAGB and GDP-bound form of RagC/RRAGC or RagD/RRAGD, promoting recruitment of mTORC1 to the lysosomes. Interacts (when phosphorylated by AMPK) with 14-3-3 protein, leading to inhibition of its activity. Interacts with SPAG5; SPAG5 competes with MTOR for RPTOR-binding, resulting in decreased mTORC1 formation. Interacts with WAC; WAC positively regulates MTOR activity by promoting the assembly of the TTT complex composed of TELO2, TTI1 and TTI2 and the RUVBL complex composed of RUVBL1 and RUVBL2 into the TTT-RUVBL complex which leads to the dimerization of the mTORC1 complex and its subsequent activation. Interacts with G3BP1. The complex formed with G3BP1 and SPAG5 is increased by oxidative stress. Interacts with HTR6. Interacts with PIH1D1. Interacts with LARP1. Interacts with BRAT1. Interacts with SIK3. Interacts with SLC38A7; this interaction mediates the recruitment of mTORC1 to the lysosome and its subsequent activation. In terms of processing, insulin-stimulated phosphorylation at Ser-863 by MTOR and MAPK8 regulates mTORC1 activity. Phosphorylated at Ser-863 by NLK in response to stress, disrupting the interaction with small GTPases Rag (RagA/RRAGA, RagB/RRAGB, RagC/RRAGC and/or RagD/RRAGD), thereby preventing lysosome recruitment and activation of the mTORC1 complex. Osmotic stress also induces phosphorylation at Ser-696, Thr-706 and Ser-863 by MAPK8. Ser-863 phosphorylation is required for phosphorylation at Ser-855 and Ser-859. In response to nutrient limitation, phosphorylated at Ser-722 and Ser-792 by AMPK; phosphorylation promotes interaction with 14-3-3 proteins, leading to negative regulation of the mTORC1 complex. Phosphorylation at Ser-722 and Ser-792 by AMPK in response to glucose starvation inhibits O-GlcNAcylation by OGT and subsequent activation of mTORC1. In response to growth factors, phosphorylated at Ser-719, Ser-721 and Ser-722 by RPS6KA1, which stimulates mTORC1 activity. Phosphorylation at Ser-791 by PKA downstream of cAMP inhibits the mTORC1 complex. Phosphorylated at Ser-877 by TBK1, leading to negative regulation of the mTORC1 complex. Post-translationally, O-GlcNAcylated by OGT upon glucose sufficiency, promoting interaction with small GTPases Rag (RagA/RRAGA, RagB/RRAGB, RagC/RRAGC and/or RagD/RRAGD) and subsequent recruitment of mTORC1 to lysosomal membranes, leading to activation of the mTORC1 complex. Phosphorylation at Ser-722 and Ser-792 by AMPK in response to glucose starvation inhibits O-GlcNAcylation. Acetylation at Lys-1097 by EP300/p300 in response to leucine metabolite acetyl-coA promotes its activity, leading to activation of the mTORC1 complex. Acetylation is decreased in response to fasting. Phosphorylated at Ser-877 by TBK1, leading to negative regulation of the mTORC1 complex. In terms of processing, ubiquitinated, leading to its degradation by the proteasome. Deubiquitinated by OTUB1 via a non-catalytic mechanism. Ubiquitinated by an E3 ubiquitin ligase complex containing VHL.

The protein resides in the cytoplasm. It is found in the lysosome. Its subcellular location is the cytoplasmic granule. Functionally, component of the mechanistic target of rapamycin complex 1 (mTORC1), an evolutionarily conserved central nutrient sensor that stimulates anabolic reactions and macromolecule biosynthesis to promote cellular biomass generation and growth. In response to nutrients, growth factors or amino acids, mTORC1 is recruited to the lysosome membrane and promotes protein, lipid and nucleotide synthesis by phosphorylating several substrates, such as ribosomal protein S6 kinase (RPS6KB1 and RPS6KB2) and EIF4EBP1 (4E-BP1). In the same time, it inhibits catabolic pathways by phosphorylating the autophagy initiation components ULK1 and ATG13, as well as transcription factor TFEB, a master regulators of lysosomal biogenesis and autophagy. The mTORC1 complex is inhibited in response to starvation and amino acid depletion. Within the mTORC1 complex, RPTOR acts both as a molecular adapter, which (1) mediates recruitment of mTORC1 to lysosomal membranes via interaction with small GTPases Rag (RagA/RRAGA, RagB/RRAGB, RagC/RRAGC and/or RagD/RRAGD), and a (2) substrate-specific adapter, which promotes substrate specificity by binding to TOS motif-containing proteins and direct them towards the active site of the MTOR kinase domain for phosphorylation. mTORC1 complex regulates many cellular processes, such as odontoblast and osteoclast differentiation or neuronal transmission. mTORC1 complex in excitatory neuronal transmission is required for the prosocial behavior induced by the psychoactive substance lysergic acid diethylamide (LSD). The sequence is that of Regulatory-associated protein of mTOR from Mus musculus (Mouse).